A 742-amino-acid polypeptide reads, in one-letter code: Mechanosensitive ion channel protein 9 (742 aa).

Positions 1–117 (MAERRVSNGE…REENGGRSLR (117 aa)) are disordered. Basic and acidic residues predominate over residues 17 to 26 (SDKEDSKDPR). Phosphoserine occurs at positions 28 and 36. The segment covering 105–117 (DSTREENGGRSLR) has biased composition (basic and acidic residues). Residues serine 142 and serine 145 each carry the phosphoserine modification. Transmembrane regions (helical) follow at residues 180 to 200 (AFLELVVFMAILGALIVSLTI), 221 to 241 (MVTLSGMLVTNWFMHFVVFII), 261 to 281 (NVQVFIWFSLVLIAWICLFDG), 292 to 312 (FLDFITWTIVSLLVGSILFLV), 524 to 544 (LITGILTVITFIVWMVLLDIA), and 559 to 579 (LAFMIGSTCKNIFESFMFVFV).

This sequence belongs to the MscS (TC 1.A.23) family. Detected in the epidermis, cortex, and endodermis of the root tip.

Its subcellular location is the cell membrane. Its function is as follows. Mechanosensitive channel that opens in response to stretch forces in the membrane lipid bilayer. The polypeptide is Mechanosensitive ion channel protein 9 (MSL9) (Arabidopsis thaliana (Mouse-ear cress)).